The primary structure comprises 86 residues: uncharacterized protein (86 aa).

The helical transmembrane segment at 63–85 (VGGRSPSIQNSFFFFFFFFFFFF) threads the bilayer.

Its subcellular location is the membrane. This is an uncharacterized protein from Dictyostelium discoideum (Social amoeba).